A 237-amino-acid chain; its full sequence is Leucyl/phenylalanyl-tRNA--protein transferase (237 aa).

It belongs to the L/F-transferase family.

Its subcellular location is the cytoplasm. It catalyses the reaction N-terminal L-lysyl-[protein] + L-leucyl-tRNA(Leu) = N-terminal L-leucyl-L-lysyl-[protein] + tRNA(Leu) + H(+). The catalysed reaction is N-terminal L-arginyl-[protein] + L-leucyl-tRNA(Leu) = N-terminal L-leucyl-L-arginyl-[protein] + tRNA(Leu) + H(+). It carries out the reaction L-phenylalanyl-tRNA(Phe) + an N-terminal L-alpha-aminoacyl-[protein] = an N-terminal L-phenylalanyl-L-alpha-aminoacyl-[protein] + tRNA(Phe). Its function is as follows. Functions in the N-end rule pathway of protein degradation where it conjugates Leu, Phe and, less efficiently, Met from aminoacyl-tRNAs to the N-termini of proteins containing an N-terminal arginine or lysine. The sequence is that of Leucyl/phenylalanyl-tRNA--protein transferase from Shewanella baltica (strain OS185).